Consider the following 239-residue polypeptide: Prolyl hydroxylase EGLN3 (239 aa).

The tract at residues 62–73 is beta(2)beta(3) 'finger-like' loop; sequence AGPRAGVSKRHL. Residues 88-104 are required for interaction with ADRB2; it reads CEAISFLLSLIDRLVLY. The 99-residue stretch at 116 to 214 folds into the Fe2OG dioxygenase domain; the sequence is ERSKAMVACY…RYAMTVWYFD (99 aa). Residues His-135, Asp-137, and His-196 each coordinate Fe cation. Residue Arg-205 coordinates 2-oxoglutarate.

Interacts with BCL2 (via its BH4 domain); the interaction disrupts the BAX-BCL4 complex inhibiting the anti-apoptotic activity of BCL2. Interacts with WDR83; the interaction leads to almost complete elimination of HIF-mediated reporter activity. Interacts with ADRB2; the interaction hydroxylates ADRB2 facilitating its ubiquitination by the VHL-E3 ligase complex. Interacts with PAX2; the interaction targets PAX2 for destruction. Interacts with PKM; the interaction hydroxylates PKM in hypoxia. Interacts with LIMD1, WTIP and AJUBA. The cofactor is Fe(2+). It depends on L-ascorbate as a cofactor. Ubiquitinated by SIAH1 and/or SIAH2 in response to the unfolded protein response (UPR), leading to its degradation. As to expression, widely expressed at low levels. Expressed at higher levels in adult heart (cardiac myocytes, aortic endothelial cells and coronary artery smooth muscle), lung and placenta, and in fetal spleen, heart and skeletal muscle. Also expressed in pancreas. Localized to pancreatic acini and islet cells.

It is found in the nucleus. The protein localises to the cytoplasm. The enzyme catalyses L-prolyl-[protein] + 2-oxoglutarate + O2 = trans-4-hydroxy-L-prolyl-[protein] + succinate + CO2. It carries out the reaction L-prolyl-[hypoxia-inducible factor alpha subunit] + 2-oxoglutarate + O2 = trans-4-hydroxy-L-prolyl-[hypoxia-inducible factor alpha subunit] + succinate + CO2. Activated in cardiovascular cells and Hela cells following exposure to hypoxia. Inhibited by polynitrogen compounds probably by chelation to Fe(2+) ions. Functionally, prolyl hydroxylase that mediates hydroxylation of proline residues in target proteins, such as PKM, TELO2, ATF4 and HIF1A. Target proteins are preferentially recognized via a LXXLAP motif. Cellular oxygen sensor that catalyzes, under normoxic conditions, the post-translational formation of 4-hydroxyproline in hypoxia-inducible factor (HIF) alpha proteins. Hydroxylates a specific proline found in each of the oxygen-dependent degradation (ODD) domains (N-terminal, NODD, and C-terminal, CODD) of HIF1A. Also hydroxylates HIF2A. Has a preference for the CODD site for both HIF1A and HIF2A. Hydroxylation on the NODD site by EGLN3 appears to require prior hydroxylation on the CODD site. Hydroxylated HIFs are then targeted for proteasomal degradation via the von Hippel-Lindau ubiquitination complex. Under hypoxic conditions, the hydroxylation reaction is attenuated allowing HIFs to escape degradation resulting in their translocation to the nucleus, heterodimerization with HIF1B, and increased expression of hypoxy-inducible genes. ELGN3 is the most important isozyme in limiting physiological activation of HIFs (particularly HIF2A) in hypoxia. Also hydroxylates PKM in hypoxia, limiting glycolysis. Under normoxia, hydroxylates and regulates the stability of ADRB2. Regulator of cardiomyocyte and neuronal apoptosis. In cardiomyocytes, inhibits the anti-apoptotic effect of BCL2 by disrupting the BAX-BCL2 complex. In neurons, has a NGF-induced proapoptotic effect, probably through regulating CASP3 activity. Also essential for hypoxic regulation of neutrophilic inflammation. Plays a crucial role in DNA damage response (DDR) by hydroxylating TELO2, promoting its interaction with ATR which is required for activation of the ATR/CHK1/p53 pathway. Also mediates hydroxylation of ATF4, leading to decreased protein stability of ATF4. This is Prolyl hydroxylase EGLN3 from Homo sapiens (Human).